Consider the following 203-residue polypeptide: METLSQDSLLECQICFNYYSPRRRPKLLDCKHTCCSVCLQQMRTSQKDVRCPWCRGVTKLPPGFSVSQLPDDPEVLAVIAIPHTSEHTPVFIKLPSNGCYMLPLPISKERALLPGDMGCRLLPGSQQKSVTVVTIPAEQQPLQGGAPQEAVEEEQDRRGVVKSSTWSGVCTVILVACVLVFLLGIVLHNMSCISKRFTVISCG.

The segment at 12–55 (CQICFNYYSPRRRPKLLDCKHTCCSVCLQQMRTSQKDVRCPWCR) adopts an RING-type zinc-finger fold. A necessary for interaction with RRAGA region spans residues 106 to 165 (ISKERALLPGDMGCRLLPGSQQKSVTVVTIPAEQQPLQGGAPQEAVEEEQDRRGVVKSST). A helical membrane pass occupies residues 167 to 187 (SGVCTVILVACVLVFLLGIVL).

This sequence belongs to the RNF152 family. Interacts with RRAGA (inactive GDP-bound form); stimulated by amino acid starvation. Interacts with SEC16A. In terms of processing, ubiquitinated. Autoubiquitinated in vitro, leading to its degradation by the proteasome. In terms of tissue distribution, widely expressed.

It is found in the lysosome membrane. The enzyme catalyses S-ubiquitinyl-[E2 ubiquitin-conjugating enzyme]-L-cysteine + [acceptor protein]-L-lysine = [E2 ubiquitin-conjugating enzyme]-L-cysteine + N(6)-ubiquitinyl-[acceptor protein]-L-lysine.. The protein operates within protein modification; protein ubiquitination. In terms of biological role, E3 ubiquitin-protein ligase that acts as a negative regulator of mTORC1 signaling by mediating ubiquitination of RagA/RRAGA and RHEB. Catalyzes 'Lys-63'-linked polyubiquitination of RagA/RRAGA in response to amino acid starvation, thereby regulating mTORC1 signaling. Also mediates monoubiquitination of RHEB, promoting its association with the TSC-TBC complex and subsequent inhibition. Also mediates 'Lys-48'-linked polyubiquitination of target proteins and their subsequent targeting to the proteasome for degradation. Induces apoptosis when overexpressed. This is E3 ubiquitin-protein ligase RNF152 from Homo sapiens (Human).